The primary structure comprises 512 residues: 2-isopropylmalate synthase (512 aa).

A Pyruvate carboxyltransferase domain is found at 5-268 (LIIFDTTLRD…DLNIDTTHIV (264 aa)). The Mn(2+) site is built by Asp14, His202, His204, and Asn239. The tract at residues 394 to 512 (AFVSLSQHSE…SQAEKVAAQG (119 aa)) is regulatory domain.

It belongs to the alpha-IPM synthase/homocitrate synthase family. LeuA type 1 subfamily. As to quaternary structure, homodimer. It depends on Mn(2+) as a cofactor.

It is found in the cytoplasm. It catalyses the reaction 3-methyl-2-oxobutanoate + acetyl-CoA + H2O = (2S)-2-isopropylmalate + CoA + H(+). The protein operates within amino-acid biosynthesis; L-leucine biosynthesis; L-leucine from 3-methyl-2-oxobutanoate: step 1/4. In terms of biological role, catalyzes the condensation of the acetyl group of acetyl-CoA with 3-methyl-2-oxobutanoate (2-ketoisovalerate) to form 3-carboxy-3-hydroxy-4-methylpentanoate (2-isopropylmalate). This Variovorax paradoxus (strain S110) protein is 2-isopropylmalate synthase.